The primary structure comprises 130 residues: Calcium-binding protein KRP1 (130 aa).

Residues 72 to 107 (LTDEDVRCMIKEGDFDCDGALNQMEFCVLMFRLSPD) enclose the EF-hand domain. The Ca(2+) site is built by aspartate 85, aspartate 87, aspartate 89, and glutamate 96.

Potential calcium sensor that binds calcium in vitro. The sequence is that of Calcium-binding protein KRP1 from Arabidopsis thaliana (Mouse-ear cress).